Here is a 110-residue protein sequence, read N- to C-terminus: Defensin-like protein 296 (110 aa).

The first 28 residues, 1 to 28, serve as a signal peptide directing secretion; it reads MASKITIFFVLALVVVCTMMVCIPTATA. 6 disulfide bridges follow: Cys34/Cys52, Cys40/Cys57, Cys45/Cys59, Cys81/Cys102, Cys87/Cys107, and Cys95/Cys109.

The protein belongs to the DEFL family.

It localises to the secreted. This Arabidopsis thaliana (Mouse-ear cress) protein is Defensin-like protein 296.